The primary structure comprises 220 residues: Small ribosomal subunit protein mS42 (220 aa).

The protein belongs to the mitochondrion-specific ribosomal protein mS42 family. Component of the mitochondrial small ribosomal subunit (mt-SSU). Mature yeast 74S mitochondrial ribosomes consist of a small (37S) and a large (54S) subunit. The 37S small subunit contains a 15S ribosomal RNA (15S mt-rRNA) and at least 32 different proteins. The 54S large subunit contains a 21S rRNA (21S mt-rRNA) and at least 45 different proteins. mS43 forms a dimer with mS42, building a large protuberance adjacent to the mRNA channel exit in the mt-SSU body.

The protein resides in the mitochondrion. In terms of biological role, component of the mitochondrial ribosome (mitoribosome), a dedicated translation machinery responsible for the synthesis of mitochondrial genome-encoded proteins, including at least some of the essential transmembrane subunits of the mitochondrial respiratory chain. The mitoribosomes are attached to the mitochondrial inner membrane and translation products are cotranslationally integrated into the membrane. This chain is Small ribosomal subunit protein mS42, found in Schizosaccharomyces pombe (strain 972 / ATCC 24843) (Fission yeast).